A 541-amino-acid chain; its full sequence is Phenazine N-monooxygenase PhzNO1 (541 aa).

Residues Asp39, Thr47 to Trp50, Asp59 to Thr60, Tyr65, and Ile112 each bind FAD. Arg57–Asp59 is an NADP(+) binding site. NADP(+) is bound by residues Thr186–Gln192, Arg209–Ser210, and Trp492.

This sequence belongs to the FAD-binding monooxygenase family. Requires FAD as cofactor.

It carries out the reaction 1,6-dihydroxyphenazine + NADPH + O2 = 1,6-dihydroxyphenazine N(5)-oxide + NADP(+) + H2O. It catalyses the reaction 1,6-dihydroxyphenazine N(5)-oxide + NADPH + O2 = 1,6-dihydroxyphenazine N(5),N(10)-dioxide + NADP(+) + H2O. The enzyme catalyses 1-hydroxy-6-methoxyphenazine + NADPH + O2 = 1-hydroxy-6-methoxyphenazine N(10)-oxide + NADP(+) + H2O. The catalysed reaction is quinolin-8-ol + NADPH + O2 = 8-hydroxyquinoline N-oxide + NADP(+) + H2O. Functionally, involved in the biosynthesis of phenazine natural products including myxin, an N(5),N(10)-dioxide phenazine antiobiotic, which has antimicrobial activity. Catalyzes the aromatic N-oxidations of phenazines, such as 1,6-dihydroxyphenazine (DHP), 1,6-dihydroxyphenazine N(5)-oxide (DHPO) and 1-hydroxy-6-methoxyphenazine to produce DHPO, iodinin (1,6-dihydroxyphenazine N(5),N(10)-dioxide) and 1-hydroxy-6-methoxyphenazine N(10)-oxide, respectively. Also catalyzes the N-oxidation of 8-hydroxyquinoline, but not 6-hydroxyquinoline (6-HQ), quinoline, quinoxaline, quinine and 2-phenylpyridine. The protein is Phenazine N-monooxygenase PhzNO1 of Lysobacter antibioticus.